A 310-amino-acid polypeptide reads, in one-letter code: Tryptophan 2,3-dioxygenase (310 aa).

Residues Met-1–Pro-36 form a disordered region. Over residues Ser-15–Pro-36 the composition is skewed to low complexity. Residues Phe-79 to His-83, Tyr-141, and Arg-145 contribute to the substrate site. His-268 serves as a coordination point for heme. Thr-282 serves as a coordination point for substrate.

It belongs to the tryptophan 2,3-dioxygenase family. As to quaternary structure, homotetramer. Heme serves as cofactor.

The catalysed reaction is L-tryptophan + O2 = N-formyl-L-kynurenine. It participates in amino-acid degradation; L-tryptophan degradation via kynurenine pathway; L-kynurenine from L-tryptophan: step 1/2. Heme-dependent dioxygenase that catalyzes the oxidative cleavage of the L-tryptophan (L-Trp) pyrrole ring and converts L-tryptophan to N-formyl-L-kynurenine. Catalyzes the oxidative cleavage of the indole moiety. The polypeptide is Tryptophan 2,3-dioxygenase (Burkholderia lata (strain ATCC 17760 / DSM 23089 / LMG 22485 / NCIMB 9086 / R18194 / 383)).